The following is a 391-amino-acid chain: Formate-dependent phosphoribosylglycinamide formyltransferase (391 aa).

Residues 18–19 and glutamate 78 contribute to the N(1)-(5-phospho-beta-D-ribosyl)glycinamide site; that span reads EL. Residues arginine 110, lysine 151, 156–161, 191–194, and glutamate 199 each bind ATP; these read SSGKGQ and EEFI. In terms of domain architecture, ATP-grasp spans 115–305; the sequence is ELAAQQLGVR…EFELHLRAIL (191 aa). Residues glutamate 264 and glutamate 276 each contribute to the Mg(2+) site. N(1)-(5-phospho-beta-D-ribosyl)glycinamide contacts are provided by residues aspartate 283, lysine 353, and 360–361; that span reads RR.

It belongs to the PurK/PurT family. In terms of assembly, homodimer.

It catalyses the reaction N(1)-(5-phospho-beta-D-ribosyl)glycinamide + formate + ATP = N(2)-formyl-N(1)-(5-phospho-beta-D-ribosyl)glycinamide + ADP + phosphate + H(+). The protein operates within purine metabolism; IMP biosynthesis via de novo pathway; N(2)-formyl-N(1)-(5-phospho-D-ribosyl)glycinamide from N(1)-(5-phospho-D-ribosyl)glycinamide (formate route): step 1/1. Its function is as follows. Involved in the de novo purine biosynthesis. Catalyzes the transfer of formate to 5-phospho-ribosyl-glycinamide (GAR), producing 5-phospho-ribosyl-N-formylglycinamide (FGAR). Formate is provided by PurU via hydrolysis of 10-formyl-tetrahydrofolate. This is Formate-dependent phosphoribosylglycinamide formyltransferase from Synechocystis sp. (strain ATCC 27184 / PCC 6803 / Kazusa).